Reading from the N-terminus, the 223-residue chain is Endonuclease NucS (223 aa).

This sequence belongs to the NucS endonuclease family.

Its subcellular location is the cytoplasm. Its function is as follows. Cleaves both 3' and 5' ssDNA extremities of branched DNA structures. In Streptomyces avermitilis (strain ATCC 31267 / DSM 46492 / JCM 5070 / NBRC 14893 / NCIMB 12804 / NRRL 8165 / MA-4680), this protein is Endonuclease NucS.